Reading from the N-terminus, the 146-residue chain is Hemoglobin subunit beta (146 aa).

Valine 1 is subject to N-acetylvaline. Positions 2-146 (HLTGEEKAAV…VANALAHKYH (145 aa)) constitute a Globin domain. The residue at position 12 (threonine 12) is a Phosphothreonine. Serine 44 bears the Phosphoserine mark. N6-acetyllysine is present on lysine 59. Histidine 63 contacts heme b. Lysine 82 bears the N6-acetyllysine mark. Histidine 92 provides a ligand contact to heme b. At cysteine 93 the chain carries S-nitrosocysteine. Lysine 144 is modified (N6-acetyllysine).

This sequence belongs to the globin family. As to quaternary structure, heterotetramer of two alpha chains and two beta chains. As to expression, red blood cells.

In terms of biological role, involved in oxygen transport from the lung to the various peripheral tissues. In Mustela putorius furo (European domestic ferret), this protein is Hemoglobin subunit beta (HBB).